Reading from the N-terminus, the 260-residue chain is Carbonic anhydrase 2 (260 aa).

S2 is subject to N-acetylserine. Residue S2 is modified to Phosphoserine. Residues 3–259 form the Alpha-carbonic anhydrase domain; sequence HHWGYGKHNG…LKGRQVKASF (257 aa). H64 (proton donor/acceptor) is an active-site residue. Zn(2+)-binding residues include H94, H96, and H119. 2 positions are modified to phosphoserine: S165 and S172. 198–199 contacts substrate; the sequence is TT.

Belongs to the alpha-carbonic anhydrase family. As to quaternary structure, interacts with SLC4A4 and SLC26A6. Interaction with SLC4A7 regulates SLC4A7 transporter activity. It depends on Zn(2+) as a cofactor.

It is found in the cytoplasm. It localises to the cell membrane. The enzyme catalyses hydrogencarbonate + H(+) = CO2 + H2O. It catalyses the reaction urea = cyanamide + H2O. With respect to regulation, inhibited by acetazolamide. Its function is as follows. Catalyzes the reversible hydration of carbon dioxide. Can also hydrate cyanamide to urea. Involved in the regulation of fluid secretion into the anterior chamber of the eye. Essential for bone resorption and osteoclast differentiation. Contributes to intracellular pH regulation in the duodenal upper villous epithelium during proton-coupled peptide absorption. Stimulates the chloride-bicarbonate exchange activity of SLC26A6. In Oryctolagus cuniculus (Rabbit), this protein is Carbonic anhydrase 2 (CA2).